The following is a 990-amino-acid chain: DNA ligase 4 (990 aa).

Positions T57 to A84 are disordered. ATP is bound by residues E324, K326, L327, R331, E394, F436, E496, K501, K518, and K520. K326 acts as the N6-AMP-lysine intermediate in catalysis. Mg(2+) is bound at residue E394. E496 contacts Mg(2+). BRCT domains follow at residues P728 to L821 and Y900 to W989.

The protein belongs to the ATP-dependent DNA ligase family. Requires Mg(2+) as cofactor.

The protein resides in the nucleus. The enzyme catalyses ATP + (deoxyribonucleotide)n-3'-hydroxyl + 5'-phospho-(deoxyribonucleotide)m = (deoxyribonucleotide)n+m + AMP + diphosphate.. In terms of biological role, DNA ligase involved in DNA non-homologous end joining (NHEJ); required for double-strand break (DSB) repair. The sequence is that of DNA ligase 4 (LIG4) from Phaeosphaeria nodorum (strain SN15 / ATCC MYA-4574 / FGSC 10173) (Glume blotch fungus).